A 643-amino-acid chain; its full sequence is Uromodulin (643 aa).

The N-terminal stretch at M1–T26 is a signal peptide. The EGF-like 1 domain maps to K32–V66. Disulfide bonds link C34–C43, C37–C52, C54–C65, C71–C85, C79–C94, C96–C108, C114–C128, C122–C137, C139–C150, C152–C163, C157–C172, C176–C269, C197–C284, C219–C257, C225–C289, C250–C258, C299–C308, C302–C317, C319–C349, C337–C427, and C368–C391. N40 carries N-linked (GlcNAc...) asparagine glycosylation. Residues D67–E109 enclose the EGF-like 2; calcium-binding domain. A glycan (N-linked (GlcNAc...) asparagine) is linked at N78. The 42-residue stretch at D110–E151 folds into the EGF-like 3; calcium-binding domain. N-linked (GlcNAc...) asparagine glycosylation occurs at N134. The segment at C152–V173 is beta hairpin. The tract at residues D174–S293 is D10C. N234 carries an N-linked (GlcNAc...) asparagine glycan. N277 carries N-linked (GlcNAc...) asparagine glycosylation. An EGF-like 4 domain is found at S294–V325. N324 is a glycosylation site (N-linked (GlcNAc...) asparagine). Residues E336–L431 are ZP-N. Residues E336–T587 form the ZP domain. N398 and N449 each carry an N-linked (GlcNAc...) asparagine glycan. Residues D432 to T455 are flexible ZP-N/ZP-C linker; important for secretion and polymerization into filaments. An internal hydrophobic patch (IHP) region spans residues G456 to Q466. Residues G456–T587 form a ZP-C region. 3 disulfides stabilise this stretch: C508-C568, C529-C584, and C573-C580. N-linked (GlcNAc...) asparagine glycosylation is present at N515. Residues R588–S591 are essential for cleavage by HPN. Positions V600 to R608 are external hydrophobic patch (EHP); regulates polymerization into filaments. S621 carries the GPI-anchor amidated serine lipid modification. Positions S622 to P643 are cleaved as a propeptide — removed in mature form.

In terms of assembly, homodimer that then polymerizes into long filaments. The filaments can additionally assemble laterally to form a sheet. The filaments consist of a zigzag-shaped backbone with laterally protruding arms which interact with bacterial adhesin fimH. Two fimH molecules can bind to a single UMOD monomer. N-glycosylated. In terms of processing, proteolytically cleaved at a conserved C-terminal proteolytic cleavage site to generate the secreted form found in urine. This cleavage is catalyzed by HPN.

Its subcellular location is the apical cell membrane. It is found in the basolateral cell membrane. It localises to the cell projection. The protein resides in the cilium membrane. The protein localises to the secreted. In terms of biological role, functions in biogenesis and organization of the apical membrane of epithelial cells of the thick ascending limb of Henle's loop (TALH), where it promotes formation of complex filamentous gel-like structure that may play a role in the water barrier permeability. May serve as a receptor for binding and endocytosis of cytokines (IL-1, IL-2) and TNF. Facilitates neutrophil migration across renal epithelia. Functionally, in the urine, may contribute to colloid osmotic pressure, retards passage of positively charged electrolytes, and inhibits formation of liquid containing supersaturated salts and subsequent formation of salt crystals. Protects against urinary tract infections by binding to type 1 fimbriated E.coli. Binds to bacterial adhesin fimH which mediates the stable formation of bacterial aggregates, prevents the binding of E.coli to uroplakins UPK1A and UPK1B which act as urothelial receptors for type I fimbriae, and allows for pathogen clearance through micturation. Also promotes aggregation of other bacteria including K.pneumoniae, P.aeruginosa and S.mitis and so may also protect against other uropathogens. This is Uromodulin (UMOD) from Bos taurus (Bovine).